A 28-amino-acid chain; its full sequence is Kappa-buthitoxin-Tt2b (28 aa).

3 disulfide bridges follow: Cys2–Cys24, Cys7–Cys20, and Cys11–Cys26.

Expressed by the venom gland.

Its subcellular location is the secreted. Its function is as follows. Blocks potassium channels Shaker-IR (with inactivation domain removed) and hKv1.2/KCNA2. The chain is Kappa-buthitoxin-Tt2b from Tityus trivittatus (Argentinean scorpion).